A 503-amino-acid polypeptide reads, in one-letter code: Cytochrome P450 monooxygenase roqO (503 aa).

The chain crosses the membrane as a helical span at residues 11 to 31; sequence YSGTACAISLFIFGITLLFPF. N-linked (GlcNAc...) asparagine glycosylation occurs at Asn-205. Cys-444 contributes to the heme binding site.

The protein belongs to the cytochrome P450 family. Heme is required as a cofactor.

It is found in the membrane. It functions in the pathway alkaloid biosynthesis. Its function is as follows. Cytochrome P450 monooxygenase; part of the gene cluster that mediates the biosynthesis of the mycotoxin meleagrin. The first stage is catalyzed by the dipeptide synthase roqA which condenses histidine and tryptophan to produce histidyltryptophanyldiketopiperazine (HTD). HTD is then converted to roquefortine C through two possible pathways. In the first pathway, prenyltransferase roqD transforms HTD to the intermediate roquefortine D, which is in turn converted to roquefortine C by the cytochrome P450 monooxygenase roqR. In the second pathway, HTD is first converted to the intermediate dehydrohistidyltryptophanyldi-ketopiperazine (DHTD) by roqR which is then prenylated by roqD to form roquefortine C. Roquefortine C can be further transformed to meleagrin via three more reactions including oxydation to glandicolin A by roqM, which is further reduced to glandicoline B by roqO. Finally, glandicoline B is converted to meleagrin by the glandicoline B O-methyltransferase roqN. More studies identified further branching and additional metabolites produced by the roquefortine/meleagrin cluster, including roquefortine F, roquefortine L, roquefortine M, roquefortine N and neoxaline. This Penicillium rubens (strain ATCC 28089 / DSM 1075 / NRRL 1951 / Wisconsin 54-1255) (Penicillium chrysogenum) protein is Cytochrome P450 monooxygenase roqO.